Reading from the N-terminus, the 94-residue chain is Large ribosomal subunit protein bL25 (94 aa).

The protein belongs to the bacterial ribosomal protein bL25 family. As to quaternary structure, part of the 50S ribosomal subunit; part of the 5S rRNA/L5/L18/L25 subcomplex. Contacts the 5S rRNA. Binds to the 5S rRNA independently of L5 and L18.

This is one of the proteins that binds to the 5S RNA in the ribosome where it forms part of the central protuberance. In Shigella boydii serotype 4 (strain Sb227), this protein is Large ribosomal subunit protein bL25.